The sequence spans 84 residues: Large ribosomal subunit protein bL27 (84 aa).

The segment at 1–20 (MAHKKGGGSTKNGRDSNPKY) is disordered.

Belongs to the bacterial ribosomal protein bL27 family.

This is Large ribosomal subunit protein bL27 from Chlorobaculum tepidum (strain ATCC 49652 / DSM 12025 / NBRC 103806 / TLS) (Chlorobium tepidum).